The sequence spans 243 residues: Type III pantothenate kinase (243 aa).

6–13 contacts ATP; the sequence is DGGNTFIK. Substrate is bound by residues Tyr-87 and 94–97; that span reads GKDR. The active-site Proton acceptor is Asp-96. Asp-117 contributes to the K(+) binding site. Thr-120 is an ATP binding site. Thr-172 is a substrate binding site.

The protein belongs to the type III pantothenate kinase family. In terms of assembly, homodimer. NH4(+) is required as a cofactor. Requires K(+) as cofactor.

It is found in the cytoplasm. The catalysed reaction is (R)-pantothenate + ATP = (R)-4'-phosphopantothenate + ADP + H(+). The protein operates within cofactor biosynthesis; coenzyme A biosynthesis; CoA from (R)-pantothenate: step 1/5. Catalyzes the phosphorylation of pantothenate (Pan), the first step in CoA biosynthesis. This Christiangramia forsetii (strain DSM 17595 / CGMCC 1.15422 / KT0803) (Gramella forsetii) protein is Type III pantothenate kinase.